A 34-amino-acid polypeptide reads, in one-letter code: Photosystem II reaction center protein Psb30 (34 aa).

A helical membrane pass occupies residues 6–26 (VIAQLVSLGVIVLVGPAVIIL).

Belongs to the Psb30/Ycf12 family. In terms of assembly, PSII is composed of 1 copy each of membrane proteins PsbA, PsbB, PsbC, PsbD, PsbE, PsbF, PsbH, PsbI, PsbJ, PsbK, PsbL, PsbM, PsbT, PsbX, PsbY, PsbZ, Psb30/Ycf12, peripheral proteins of the oxygen-evolving complex and a large number of cofactors. It forms dimeric complexes.

Its subcellular location is the plastid. It localises to the chloroplast thylakoid membrane. Functionally, a core subunit of photosystem II (PSII), probably helps stabilize the reaction center. The polypeptide is Photosystem II reaction center protein Psb30 (Pyropia yezoensis (Susabi-nori)).